A 127-amino-acid polypeptide reads, in one-letter code: Small ribosomal subunit protein uS11 (127 aa).

The protein belongs to the universal ribosomal protein uS11 family. In terms of assembly, part of the 30S ribosomal subunit. Interacts with proteins S7 and S18. Binds to IF-3.

Functionally, located on the platform of the 30S subunit, it bridges several disparate RNA helices of the 16S rRNA. Forms part of the Shine-Dalgarno cleft in the 70S ribosome. The chain is Small ribosomal subunit protein uS11 from Ruthia magnifica subsp. Calyptogena magnifica.